Here is a 111-residue protein sequence, read N- to C-terminus: MFFFQGLYSSIMYVFFYIRIHTVFLRALYNSPFTALPVFKSLAVTLKAPSLLMLKIISTPLAFLIPNSINLVPKVYSFSLTTSGSSSDHSLSSSSSAFSSFGIGSKVFSSM.

Transmembrane regions (helical) follow at residues 7–29 (LYSSIMYVFFYIRIHTVFLRALY) and 49–71 (PSLLMLKIISTPLAFLIPNSINL).

It is found in the membrane. This is an uncharacterized protein from Saccharomyces cerevisiae (strain ATCC 204508 / S288c) (Baker's yeast).